The following is a 234-amino-acid chain: MSTKSMIRDVELAEEVLSEKAGGPQGSRSCLCLSLFSFLLVAGATTLFCLLHFGVIGPQREEQSPGGPSINSPLVQTLRSSSQASSNKPVAHVVADINSPGQLRWWDSYANALMANGVKLEDNQLVVPADGLYLIYSQVLFRGQGCPSTPLFLTHTISRIAVSYQTKVNILSAIKSPCHRETPEWAEAKPWYEPIYQGGVFQLEKGDRLSAEINLPDYLDYAESGQVYFGIIAL.

Over 1 to 35 the chain is Cytoplasmic; the sequence is MSTKSMIRDVELAEEVLSEKAGGPQGSRSCLCLSL. Ser2 carries the phosphoserine; by CK1 modification. A lipid anchor (N6-myristoyl lysine) is attached at Lys20. A helical; Signal-anchor for type II membrane protein transmembrane segment spans residues 36 to 56; that stretch reads FSFLLVAGATTLFCLLHFGVI. The Extracellular segment spans residues 57-234; that stretch reads GPQREEQSPG…GQVYFGIIAL (178 aa). The O-linked (GalNAc...) serine; in soluble form glycan is linked to Ser81. The 146-residue stretch at 89–234 folds into the THD domain; it reads PVAHVVADIN…GQVYFGIIAL (146 aa). Cys146 and Cys178 are joined by a disulfide.

Belongs to the tumor necrosis factor family. In terms of assembly, homotrimer. Interacts with SPPL2B. Post-translationally, the soluble form derives from the membrane form by proteolytic processing. The membrane-bound form is further proteolytically processed by SPPL2A or SPPL2B through regulated intramembrane proteolysis producing TNF intracellular domains (ICD1 and ICD2) released in the cytosol and TNF C-domain 1 and C-domain 2 secreted into the extracellular space. In terms of processing, the membrane form, but not the soluble form, is phosphorylated on serine residues. Dephosphorylation of the membrane form occurs by binding to soluble TNFRSF1A/TNFR1. O-glycosylated; glycans contain galactose, N-acetylgalactosamine and N-acetylneuraminic acid. Post-translationally, the soluble form is demyristoylated by SIRT6, promoting its secretion.

The protein localises to the cell membrane. Its subcellular location is the membrane. It localises to the secreted. Functionally, cytokine that binds to TNFRSF1A/TNFR1 and TNFRSF1B/TNFBR. It is mainly secreted by macrophages and can induce cell death of certain tumor cell lines. It is potent pyrogen causing fever by direct action or by stimulation of interleukin-1 secretion and is implicated in the induction of cachexia, Under certain conditions it can stimulate cell proliferation and induce cell differentiation. Induces insulin resistance in adipocytes via inhibition of insulin-induced IRS1 tyrosine phosphorylation and insulin-induced glucose uptake. Induces GKAP42 protein degradation in adipocytes which is partially responsible for TNF-induced insulin resistance. Plays a role in angiogenesis by inducing VEGF production synergistically with IL1B and IL6. Promotes osteoclastogenesis and therefore mediates bone resorption. In terms of biological role, the TNF intracellular domain (ICD) form induces IL12 production in dendritic cells. The protein is Tumor necrosis factor (TNF) of Bos taurus (Bovine).